The primary structure comprises 526 residues: ATP synthase subunit alpha (526 aa).

171–178 provides a ligand contact to ATP; it reads GDRQTGKT.

Belongs to the ATPase alpha/beta chains family. F-type ATPases have 2 components, CF(1) - the catalytic core - and CF(0) - the membrane proton channel. CF(1) has five subunits: alpha(3), beta(3), gamma(1), delta(1), epsilon(1). CF(0) has three main subunits: a(1), b(2) and c(9-12). The alpha and beta chains form an alternating ring which encloses part of the gamma chain. CF(1) is attached to CF(0) by a central stalk formed by the gamma and epsilon chains, while a peripheral stalk is formed by the delta and b chains.

Its subcellular location is the cell inner membrane. The enzyme catalyses ATP + H2O + 4 H(+)(in) = ADP + phosphate + 5 H(+)(out). Its function is as follows. Produces ATP from ADP in the presence of a proton gradient across the membrane. The alpha chain is a regulatory subunit. This chain is ATP synthase subunit alpha, found in Cytophaga hutchinsonii (strain ATCC 33406 / DSM 1761 / CIP 103989 / NBRC 15051 / NCIMB 9469 / D465).